A 394-amino-acid polypeptide reads, in one-letter code: NADH-quinone oxidoreductase subunit D 2 (394 aa).

Belongs to the complex I 49 kDa subunit family. In terms of assembly, NDH-1 is composed of 14 different subunits. Subunits NuoB, C, D, E, F, and G constitute the peripheral sector of the complex.

The protein resides in the cell membrane. The enzyme catalyses a quinone + NADH + 5 H(+)(in) = a quinol + NAD(+) + 4 H(+)(out). In terms of biological role, NDH-1 shuttles electrons from NADH, via FMN and iron-sulfur (Fe-S) centers, to quinones in the respiratory chain. The immediate electron acceptor for the enzyme in this species is believed to be a menaquinone. Couples the redox reaction to proton translocation (for every two electrons transferred, four hydrogen ions are translocated across the cytoplasmic membrane), and thus conserves the redox energy in a proton gradient. The protein is NADH-quinone oxidoreductase subunit D 2 of Streptomyces griseus subsp. griseus (strain JCM 4626 / CBS 651.72 / NBRC 13350 / KCC S-0626 / ISP 5235).